Reading from the N-terminus, the 350-residue chain is N-acetyl-gamma-glutamyl-phosphate reductase (350 aa).

Cys-153 is a catalytic residue.

The protein belongs to the NAGSA dehydrogenase family. Type 1 subfamily.

It localises to the cytoplasm. It carries out the reaction N-acetyl-L-glutamate 5-semialdehyde + phosphate + NADP(+) = N-acetyl-L-glutamyl 5-phosphate + NADPH + H(+). It functions in the pathway amino-acid biosynthesis; L-arginine biosynthesis; N(2)-acetyl-L-ornithine from L-glutamate: step 3/4. Functionally, catalyzes the NADPH-dependent reduction of N-acetyl-5-glutamyl phosphate to yield N-acetyl-L-glutamate 5-semialdehyde. This is N-acetyl-gamma-glutamyl-phosphate reductase from Gloeobacter violaceus (strain ATCC 29082 / PCC 7421).